We begin with the raw amino-acid sequence, 1228 residues long: Structural maintenance of chromosomes protein 1 (1228 aa).

32-39 serves as a coordination point for ATP; sequence GPNGAGKS. Residues 197 to 510 are a coiled coil; the sequence is NKKRGINAEL…ESKQDAKKRE (314 aa). An SMC hinge domain is found at 522–635; it reads VKGRIIDLCT…CDSMTVARDL (114 aa). Coiled coils occupy residues 710 to 783, 814 to 926, and 984 to 1068; these read KLHS…KIFS, EFTK…EIDR, and VEVD…KRLQ.

The protein belongs to the SMC family. SMC1 subfamily. In terms of assembly, cohesin complexes are composed of the psm1/smc1 and psm3/smc3 heterodimer attached via their SMC hinge domain, rad21/scc1 which link them, and psc3/scc3, which interacts with rad21.

The protein localises to the nucleus. Its subcellular location is the chromosome. Involved in chromosome cohesion during cell cycle and in DNA repair. Central component of cohesin complex. The cohesin complex is required for the cohesion of sister chromatids after DNA replication. The cohesin complex apparently forms a large proteinaceous ring within which sister chromatids can be trapped. At anaphase, the complex is cleaved and dissociates from chromatin, allowing sister chromatids to segregate. This Schizosaccharomyces pombe (strain 972 / ATCC 24843) (Fission yeast) protein is Structural maintenance of chromosomes protein 1 (psm1).